Here is a 283-residue protein sequence, read N- to C-terminus: MQIITDPIQMQAIAEKLRLNRQLIGVVMTMGALHEGHLSLIKEARKIAGTIILTIFVNPRQFAPHEDFHRYPRPFEQDAAHAKAAEVDYVFAPPVDAMYTGNFQTTVHPGPLGEQFEGKQRPGHFSGVATIVTKLLQITRPHIAVFGEKDAQQLAVIKQLVKDLNIDVRIIEAPIIRDENGLAVSSRNIYLSAKERDAATVLYKGLCHAERRIAEPCLDLDAIVPEVENIIKSALSCHPEYICFVDDETFLPASKAEKGKTYRLLLAVQAGTVRLIDNRKFMV.

Residue 30–37 (MGALHEGH) participates in ATP binding. Residue His-37 is the Proton donor of the active site. (R)-pantoate is bound at residue Gln-61. Gln-61 provides a ligand contact to beta-alanine. 147–150 (GEKD) contributes to the ATP binding site. Gln-153 provides a ligand contact to (R)-pantoate. Residues Ile-176 and 184–187 (VSSR) each bind ATP.

The protein belongs to the pantothenate synthetase family. As to quaternary structure, homodimer.

The protein resides in the cytoplasm. The enzyme catalyses (R)-pantoate + beta-alanine + ATP = (R)-pantothenate + AMP + diphosphate + H(+). The protein operates within cofactor biosynthesis; (R)-pantothenate biosynthesis; (R)-pantothenate from (R)-pantoate and beta-alanine: step 1/1. Its function is as follows. Catalyzes the condensation of pantoate with beta-alanine in an ATP-dependent reaction via a pantoyl-adenylate intermediate. This chain is Pantothenate synthetase, found in Chlorobium phaeobacteroides (strain DSM 266 / SMG 266 / 2430).